The chain runs to 865 residues: TATA box-binding protein-associated factor RNA polymerase I subunit B (865 aa).

Residues 1-33 (MHSAKNEKCNACGGYRFSVNDGFKYCDRCGALF) form an RRN7-type zinc finger. Residues Cys9, Cys12, Cys26, and Cys29 each coordinate Zn(2+). Residues 35-99 (NFEELEEEEG…DFLQQQAIKG (65 aa)) form a B-reader region. Positions 100–111 (EELELPHDATPD) are B-linker. The segment at 112-348 (YLYRLALRLF…SQPERMKQGE (237 aa)) is N-terminal cyclin fold. The interval 233–261 (DEDGDQDAQGGQQLDDLTLETTQNPDESI) is disordered. Low complexity predominate over residues 239-248 (DAQGGQQLDD). The segment covering 252–261 (ETTQNPDESI) has biased composition (polar residues). Residues 349 to 496 (VVKPTIVDYA…LLTLRLTFQL (148 aa)) are C-terminal cyclin fold.

Belongs to the RRN7/TAF1B family.

The protein localises to the nucleus. Its subcellular location is the nucleolus. Component of RNA polymerase I core factor complex that acts as a GTF2B/TFIIB-like factor and plays a key role in multiple steps during transcription initiation such as pre-initiation complex (PIC) assembly and postpolymerase recruitment events in polymerase I (Pol I) transcription. Binds rDNA promoters and plays a role in Pol I recruitment. This Caenorhabditis elegans protein is TATA box-binding protein-associated factor RNA polymerase I subunit B.